Reading from the N-terminus, the 582-residue chain is DnaJ protein ERDJ3A (582 aa).

The signal sequence occupies residues Met-1–Ala-25. Positions Asp-29–Gly-93 constitute a J domain. An N-linked (GlcNAc...) asparagine glycan is attached at Asn-61. The disordered stretch occupies residues Gly-178–Ser-201. A coiled-coil region spans residues Val-407 to Lys-437.

In terms of assembly, interacts with BIP5.

Its subcellular location is the endoplasmic reticulum. The protein resides in the vacuole. May play a role in protein folding in the endoplasmic reticulum. The chain is DnaJ protein ERDJ3A from Oryza sativa subsp. japonica (Rice).